The primary structure comprises 52 residues: UPF0181 protein HI_1434.2 (52 aa).

It belongs to the UPF0181 family.

This chain is UPF0181 protein HI_1434.2, found in Haemophilus influenzae (strain ATCC 51907 / DSM 11121 / KW20 / Rd).